Consider the following 496-residue polypeptide: tRNA modification GTPase mss1, mitochondrial (496 aa).

Residues 1–19 (MRILNRVFLNTFQACFRRF) constitute a mitochondrion transit peptide. Residues 239-416 (GINVAILGPS…FLQALSSTFE (178 aa)) form the TrmE-type G domain. GTP-binding positions include 246 to 253 (GPSNAGKS), 293 to 297 (DTAGL), and 363 to 366 (NKVD).

The protein belongs to the TRAFAC class TrmE-Era-EngA-EngB-Septin-like GTPase superfamily. TrmE GTPase family.

The protein localises to the mitochondrion. In terms of biological role, GTPase involved in the 5-carboxymethylaminomethyl modification (mnm(5)s(2)U34) of the wobble uridine base in mitochondrial tRNAs. This Schizosaccharomyces pombe (strain 972 / ATCC 24843) (Fission yeast) protein is tRNA modification GTPase mss1, mitochondrial (mss1).